The sequence spans 291 residues: ATP synthase gamma chain (291 aa).

It belongs to the ATPase gamma chain family. As to quaternary structure, F-type ATPases have 2 components, CF(1) - the catalytic core - and CF(0) - the membrane proton channel. CF(1) has five subunits: alpha(3), beta(3), gamma(1), delta(1), epsilon(1). CF(0) has three main subunits: a, b and c.

It localises to the cell membrane. In terms of biological role, produces ATP from ADP in the presence of a proton gradient across the membrane. The gamma chain is believed to be important in regulating ATPase activity and the flow of protons through the CF(0) complex. The sequence is that of ATP synthase gamma chain from Streptococcus pyogenes serotype M3 (strain ATCC BAA-595 / MGAS315).